The following is a 168-amino-acid chain: Large ribosomal subunit protein uL5 (168 aa).

The protein belongs to the universal ribosomal protein uL5 family. As to quaternary structure, part of the 50S ribosomal subunit; contacts the 5S rRNA and probably tRNA. Forms a bridge to the 30S subunit in the 70S ribosome.

Functionally, this is one of the proteins that bind and probably mediate the attachment of the 5S RNA into the large ribosomal subunit, where it forms part of the central protuberance. In the 70S ribosome it contacts protein S13 of the 30S subunit (bridge B1b), connecting the 2 subunits; this bridge is implicated in subunit movement. May contact the P site tRNA; the 5S rRNA and some of its associated proteins might help stabilize positioning of ribosome-bound tRNAs. The polypeptide is Large ribosomal subunit protein uL5 (Methanospirillum hungatei JF-1 (strain ATCC 27890 / DSM 864 / NBRC 100397 / JF-1)).